A 289-amino-acid chain; its full sequence is Agroclavine dehydrogenase (289 aa).

It belongs to the fgaFS/easG family. Monomer.

The enzyme catalyses agroclavine + NADP(+) = didehydroagroclavine + NADPH + H(+). It functions in the pathway alkaloid biosynthesis; ergot alkaloid biosynthesis. Its function is as follows. Agroclavine dehydrogenase; part of the gene cluster that mediates the biosynthesis of fungal ergot alkaloid ergovaline, the predominant ergopeptine product in E.festucae var. lolii. DmaW catalyzes the first step of ergot alkaloid biosynthesis by condensing dimethylallyl diphosphate (DMAP) and tryptophan to form 4-dimethylallyl-L-tryptophan. The second step is catalyzed by the methyltransferase easF that methylates 4-dimethylallyl-L-tryptophan in the presence of S-adenosyl-L-methionine, resulting in the formation of 4-dimethylallyl-L-abrine. The catalase easC and the FAD-dependent oxidoreductase easE then transform 4-dimethylallyl-L-abrine to chanoclavine-I which is further oxidized by easD in the presence of NAD(+), resulting in the formation of chanoclavine-I aldehyde. Agroclavine dehydrogenase easG then mediates the conversion of chanoclavine-I aldehyde to agroclavine via a non-enzymatic adduct reaction: the substrate is an iminium intermediate that is formed spontaneously from chanoclavine-I aldehyde in the presence of glutathione. Further conversion of agroclavine to paspalic acid is a two-step process involving oxidation of agroclavine to elymoclavine and of elymoclavine to paspalic acid, the second step being performed by the elymoclavine oxidase cloA. However, cloA does not encode a functional enzyme indicating that C.fusiformis terminates its ergot alkaloid pathway at elymoclavine. The protein is Agroclavine dehydrogenase of Claviceps fusiformis (Ergot fungus).